A 117-amino-acid chain; its full sequence is Protein RALF-like 32 (117 aa).

Positions 1 to 26 are cleaved as a signal peptide; it reads MEIKPSRIFSTITIFFLCLLLAHVTS. Positions 27–64 are cleaved as a propeptide — removed in mature form; the sequence is KASSSSLCNGSVAECSSMVETEEMSVIMESWSSQRLTE. Asn35 carries N-linked (GlcNAc...) asparagine glycosylation. The tract at residues 77–107 is disordered; sequence RNQPACDGGKRGESYSTQCLPPPSNPYSRGC. Cystine bridges form between Cys82/Cys95 and Cys107/Cys113.

Belongs to the plant rapid alkalinization factor (RALF) family. Post-translationally, proteolytically cleaved, probably by S1P, a subtilisin-like serine protease (subtilase).

The protein localises to the secreted. Its function is as follows. Cell signaling peptide that may regulate plant stress, growth, and development. Mediates a rapid alkalinization of extracellular space by mediating a transient increase in the cytoplasmic Ca(2+) concentration leading to a calcium-dependent signaling events through a cell surface receptor and a concomitant activation of some intracellular mitogen-activated protein kinases. This is Protein RALF-like 32 (RALFL32) from Arabidopsis thaliana (Mouse-ear cress).